A 213-amino-acid polypeptide reads, in one-letter code: ATP synthase peripheral stalk subunit OSCP, mitochondrial (213 aa).

Residues 1–23 (MAAPAVSGFSRQVRCFSTSVVRP) constitute a mitochondrion transit peptide. Residues 5–23 (AVSGFSRQVRCFSTSVVRP) carry the SIFI-degron motif. N6-acetyllysine is present on residues Lys54, Lys60, Lys70, and Lys73. Lys90 bears the N6-succinyllysine mark. N6-acetyllysine; alternate occurs at positions 100 and 158. Lys100 and Lys158 each carry N6-succinyllysine; alternate. Lys172, Lys176, and Lys192 each carry N6-acetyllysine. The residue at position 199 (Lys199) is an N6-succinyllysine.

This sequence belongs to the ATPase delta chain family. In terms of assembly, component of the ATP synthase complex composed at least of ATP5F1A/subunit alpha, ATP5F1B/subunit beta, ATP5MC1/subunit c (homooctomer), MT-ATP6/subunit a, MT-ATP8/subunit 8, ATP5ME/subunit e, ATP5MF/subunit f, ATP5MG/subunit g, ATP5MK/subunit k, ATP5MJ/subunit j, ATP5F1C/subunit gamma, ATP5F1D/subunit delta, ATP5F1E/subunit epsilon, ATP5PF/subunit F6, ATP5PB/subunit b, ATP5PD/subunit d, ATP5PO/subunit OSCP. ATP synthase complex consists of a soluble F(1) head domain (subunits alpha(3) and beta(3)) - the catalytic core - and a membrane F(0) domain - the membrane proton channel (subunits c, a, 8, e, f, g, k and j). These two domains are linked by a central stalk (subunits gamma, delta, and epsilon) rotating inside the F1 region and a stationary peripheral stalk (subunits F6, b, d, and OSCP). Post-translationally, in response to mitochondrial stress, the precursor protein is ubiquitinated by the SIFI complex in the cytoplasm before mitochondrial import, leading to its degradation. Within the SIFI complex, UBR4 initiates ubiquitin chain that are further elongated or branched by KCMF1.

The protein localises to the mitochondrion. It is found in the mitochondrion inner membrane. Subunit OSCP, of the mitochondrial membrane ATP synthase complex (F(1)F(0) ATP synthase or Complex V) that produces ATP from ADP in the presence of a proton gradient across the membrane which is generated by electron transport complexes of the respiratory chain. ATP synthase complex consist of a soluble F(1) head domain - the catalytic core - and a membrane F(1) domain - the membrane proton channel. These two domains are linked by a central stalk rotating inside the F(1) region and a stationary peripheral stalk. During catalysis, ATP synthesis in the catalytic domain of F(1) is coupled via a rotary mechanism of the central stalk subunits to proton translocation. In vivo, can only synthesize ATP although its ATP hydrolase activity can be activated artificially in vitro. Part of the complex F(0) domain. Part of the complex F(0) domain and the peripheric stalk, which acts as a stator to hold the catalytic alpha(3)beta(3) subcomplex and subunit a/ATP6 static relative to the rotary elements. This is ATP synthase peripheral stalk subunit OSCP, mitochondrial from Rhinolophus ferrumequinum (Greater horseshoe bat).